A 491-amino-acid chain; its full sequence is NADH-ubiquinone oxidoreductase chain 2 (491 aa).

14 consecutive transmembrane segments (helical) span residues 11 to 31 (MIKYSIYILPLIILIVLSISI), 38 to 58 (VHIIIQSLKLTLIVIMIVIGI), 74 to 94 (ELIKLFEYLLLGVSYMIIKMF), 106 to 126 (ITDEGLILIYSSIIGMLISME), 129 to 149 (NLITLFLSLEISSICFYILAL), 161 to 181 (LKYYIIGGIATTILLLGIVSI), 210 to 230 (IALIVLGLILKLGIAPFHGWL), 238 to 258 (GMLMTFYLTITQKLVTLMVLI), 270 to 290 (AIMFTNGLIILILVTLVVGTI), 298 to 318 (LIRFIAYSAIVNSALLILMLA), 330 to 350 (VYYLINYIIGLTVLMSLIMGF), 375 to 395 (GAIVYILVLMYLAGLPPMTNF), 411 to 433 (VYLTMLAFFLSVGVMIYYMNLVK), and 463 to 483 (IVLGVMWLIFSQLYLDEILNV).

It belongs to the complex I subunit 2 family.

It is found in the mitochondrion inner membrane. It catalyses the reaction a ubiquinone + NADH + 5 H(+)(in) = a ubiquinol + NAD(+) + 4 H(+)(out). Core subunit of the mitochondrial membrane respiratory chain NADH dehydrogenase (Complex I) that is believed to belong to the minimal assembly required for catalysis. Complex I functions in the transfer of electrons from NADH to the respiratory chain. The immediate electron acceptor for the enzyme is believed to be ubiquinone. The chain is NADH-ubiquinone oxidoreductase chain 2 (nad2) from Dictyostelium citrinum (Slime mold).